Consider the following 317-residue polypeptide: Ribosomal RNA small subunit methyltransferase H (317 aa).

S-adenosyl-L-methionine contacts are provided by residues 32–34, Asp51, Phe78, Asp99, and Gln106; that span reads GGH.

It belongs to the methyltransferase superfamily. RsmH family.

The protein resides in the cytoplasm. It carries out the reaction cytidine(1402) in 16S rRNA + S-adenosyl-L-methionine = N(4)-methylcytidine(1402) in 16S rRNA + S-adenosyl-L-homocysteine + H(+). Its function is as follows. Specifically methylates the N4 position of cytidine in position 1402 (C1402) of 16S rRNA. This Helicobacter hepaticus (strain ATCC 51449 / 3B1) protein is Ribosomal RNA small subunit methyltransferase H.